Reading from the N-terminus, the 150-residue chain is Viral late gene transcription factor 2 (150 aa).

Belongs to the orthopoxvirus VLTF-2/OPG126 family. As to quaternary structure, interacts with itself. Interacts with the late transcription factors VLTF-1/OPG093.

Acts with RNA polymerase to initiate transcription from late gene promoters. The sequence is that of Viral late gene transcription factor 2 (OPG126) from Vaccinia virus (strain Western Reserve) (VACV).